Here is a 247-residue protein sequence, read N- to C-terminus: Type III pantothenate kinase (247 aa).

Residue 6 to 13 (DVGNTSIY) participates in ATP binding. 102 to 105 (GADL) is a substrate binding site. Catalysis depends on aspartate 104, which acts as the Proton acceptor. Position 122 (aspartate 122) interacts with K(+). Threonine 125 is a binding site for ATP. Threonine 176 contributes to the substrate binding site.

This sequence belongs to the type III pantothenate kinase family. Homodimer. NH4(+) serves as cofactor. The cofactor is K(+).

It localises to the cytoplasm. The catalysed reaction is (R)-pantothenate + ATP = (R)-4'-phosphopantothenate + ADP + H(+). It functions in the pathway cofactor biosynthesis; coenzyme A biosynthesis; CoA from (R)-pantothenate: step 1/5. Catalyzes the phosphorylation of pantothenate (Pan), the first step in CoA biosynthesis. The polypeptide is Type III pantothenate kinase (Acholeplasma laidlawii (strain PG-8A)).